Consider the following 150-residue polypeptide: D-aminoacyl-tRNA deacylase (150 aa).

Residues 138–139 (GP) carry the Gly-cisPro motif, important for rejection of L-amino acids motif.

The protein belongs to the DTD family. Homodimer.

It localises to the cytoplasm. The catalysed reaction is glycyl-tRNA(Ala) + H2O = tRNA(Ala) + glycine + H(+). It carries out the reaction a D-aminoacyl-tRNA + H2O = a tRNA + a D-alpha-amino acid + H(+). An aminoacyl-tRNA editing enzyme that deacylates mischarged D-aminoacyl-tRNAs. Also deacylates mischarged glycyl-tRNA(Ala), protecting cells against glycine mischarging by AlaRS. Acts via tRNA-based rather than protein-based catalysis; rejects L-amino acids rather than detecting D-amino acids in the active site. By recycling D-aminoacyl-tRNA to D-amino acids and free tRNA molecules, this enzyme counteracts the toxicity associated with the formation of D-aminoacyl-tRNA entities in vivo and helps enforce protein L-homochirality. This is D-aminoacyl-tRNA deacylase from Akkermansia muciniphila (strain ATCC BAA-835 / DSM 22959 / JCM 33894 / BCRC 81048 / CCUG 64013 / CIP 107961 / Muc).